Reading from the N-terminus, the 250-residue chain is Proteasome subunit alpha type-4 (250 aa).

The protein belongs to the peptidase T1A family. The 26S proteasome consists of a 20S proteasome core and two 19S regulatory subunits. The 20S proteasome core is composed of 28 subunits that are arranged in four stacked rings, resulting in a barrel-shaped structure. The two end rings are each formed by seven alpha subunits, and the two central rings are each formed by seven beta subunits. The catalytic chamber with the active sites is on the inside of the barrel.

The protein resides in the cytoplasm. Its subcellular location is the nucleus. In terms of biological role, the proteasome is a multicatalytic proteinase complex which is characterized by its ability to cleave peptides with Arg, Phe, Tyr, Leu, and Glu adjacent to the leaving group at neutral or slightly basic pH. The proteasome has an ATP-dependent proteolytic activity. The polypeptide is Proteasome subunit alpha type-4 (PAC1) (Spinacia oleracea (Spinach)).